The chain runs to 213 residues: Large ribosomal subunit protein uL23 (213 aa).

A large ribosomal subunit protein uL23 region spans residues 1–117; sequence MNHNEIIKYP…KSTSELKLEE (117 aa). The unknown stretch occupies residues 118 to 213; it reads KIAAKIAAKE…TTKKTTTKKV (96 aa).

This sequence belongs to the universal ribosomal protein uL23 family. As to quaternary structure, part of the 50S ribosomal subunit. Contacts protein L29, and trigger factor when it is bound to the ribosome.

In terms of biological role, one of the early assembly proteins it binds 23S rRNA. One of the proteins that surrounds the polypeptide exit tunnel on the outside of the ribosome. Forms the main docking site for trigger factor binding to the ribosome. This is Large ribosomal subunit protein uL23 from Mycoplasma mobile (strain ATCC 43663 / 163K / NCTC 11711) (Mesomycoplasma mobile).